The following is a 555-amino-acid chain: Chaperonin GroEL 2 (555 aa).

Residues 29 to 32, 86 to 90, glycine 414, 480 to 482, and aspartate 496 each bind ATP; these read TLGP, DGTTT, and NAL.

The protein belongs to the chaperonin (HSP60) family. Forms a cylinder of 14 subunits composed of two heptameric rings stacked back-to-back. Interacts with the co-chaperonin GroES.

The protein resides in the cytoplasm. It catalyses the reaction ATP + H2O + a folded polypeptide = ADP + phosphate + an unfolded polypeptide.. In terms of biological role, together with its co-chaperonin GroES, plays an essential role in assisting protein folding. The GroEL-GroES system forms a nano-cage that allows encapsulation of the non-native substrate proteins and provides a physical environment optimized to promote and accelerate protein folding. The polypeptide is Chaperonin GroEL 2 (Synechococcus sp. (strain ATCC 27144 / PCC 6301 / SAUG 1402/1) (Anacystis nidulans)).